The sequence spans 122 residues: Large ribosomal subunit protein uL14 (122 aa).

The protein belongs to the universal ribosomal protein uL14 family. Part of the 50S ribosomal subunit. Forms a cluster with proteins L3 and L19. In the 70S ribosome, L14 and L19 interact and together make contacts with the 16S rRNA in bridges B5 and B8.

Binds to 23S rRNA. Forms part of two intersubunit bridges in the 70S ribosome. In Borreliella burgdorferi (strain ATCC 35210 / DSM 4680 / CIP 102532 / B31) (Borrelia burgdorferi), this protein is Large ribosomal subunit protein uL14.